An 861-amino-acid polypeptide reads, in one-letter code: Probable linoleate 9S-lipoxygenase 7 (861 aa).

One can recognise a PLAT domain in the interval 29-160 (NVLDFTDLAG…NYKSDRIFFA (132 aa)). The region spanning 163–861 (PYLPSETPEL…GKGIPNSVSI (699 aa)) is the Lipoxygenase domain. Positions 220–246 (TLGGSAEYPYPRRGRTGRPPTRTDPKS) are disordered. Residues His-522, His-527, His-713, Asn-717, and Ile-861 each coordinate Fe cation.

It belongs to the lipoxygenase family. Monomer. The cofactor is Fe cation. In terms of tissue distribution, expressed in tubers. Detected in sprouts and flowers. but not in leaves or stems.

The protein resides in the cytoplasm. It carries out the reaction (9Z,12Z)-octadecadienoate + O2 = (9S)-hydroperoxy-(10E,12Z)-octadecadienoate. It participates in lipid metabolism; oxylipin biosynthesis. In terms of biological role, plant lipoxygenases may be involved in a number of diverse aspects of plant physiology including growth and development, pest resistance, and senescence or responses to wounding. Catalyzes the hydroperoxidation of lipids containing a cis,cis-1,4-pentadiene structure. The polypeptide is Probable linoleate 9S-lipoxygenase 7 (LOX1.7) (Solanum tuberosum (Potato)).